The primary structure comprises 485 residues: MERRMKGGYLDQRVPYTFCSKSPGNGSLGEALMVPQGKLMDPGSLPPSDSEDLFQDLSHFQETWLAEAQVPDSDEQFVPDFHSENSFHSPTTRIKKEPQSPRTDPALSCSRKPPLPYHHGEQCLYSSAYDSPRQIAIKSPAPGAPGQSPLQPFSRAEQQQSLLRASSSSQSHPGHGYLGEHSSVFQQPVDMCHSFTSPQGGGREPLPAPYQHQLSEPCPPYPQQNFKQEYHDPLYEQAGQPASSQGGVSGHRYPGAGVVIKQERTDFAYDSDVPGCASMYLHPEGFSGPSPGDGVMGYGYEKSLRPFPDDVCIVPEKFEGDIKQEGIGAFREGPPYQRRGALQLWQFLVALLDDPTNAHFIAWTGRGMEFKLIEPEEVARLWGIQKNRPAMNYDKLSRSLRYYYEKGIMQKVAGERYVYKFVCEPEALFSLAFPDNQRPALKAEFDRPVSEEDTVPLSHLDESPAYLPELTGPAPPFGHRGGYSY.

A Glycyl lysine isopeptide (Lys-Gly) (interchain with G-Cter in SUMO2) cross-link involves residue Lys6. 2 disordered regions span residues 79–114 (PDFH…RKPP) and 135–214 (IAIK…QHQL). A Glycyl lysine isopeptide (Lys-Gly) (interchain with G-Cter in SUMO) cross-link involves residue Lys95. Phosphoserine is present on Ser100. Lys138 is covalently cross-linked (Glycyl lysine isopeptide (Lys-Gly) (interchain with G-Cter in SUMO2)). 2 positions are modified to phosphoserine: Ser139 and Ser148. Low complexity predominate over residues 158–171 (QQQSLLRASSSSQS). Ser215 is modified (phosphoserine). Glycyl lysine isopeptide (Lys-Gly) (interchain with G-Cter in SUMO) cross-links involve residues Lys227 and Lys261. Lys323 participates in a covalent cross-link: Glycyl lysine isopeptide (Lys-Gly) (interchain with G-Cter in SUMO2). A DNA-binding region (ETS) is located at residues 342–422 (LQLWQFLVAL…AGERYVYKFV (81 aa)).

The protein belongs to the ETS family. Sumoylated; enhanced upon ERK/MAP kinase pathway activation it positively regulates the transcriptional activator capacity. Sumoylation at Lys-95 probably requires phosphorylation at Ser-100. Transiently polysumoylated and desumoylated by SENP1. Sumoylation is a prerequisite to polyubiquitination which in turn increases proteasomal-mediated degradation. Probably polyubiquitinated by RNF4 and deubiquitinated by USP2. As to expression, epididymis and brain.

It localises to the nucleus. Its function is as follows. Transcriptional activator. May play a role in keratinocyte differentiation. This is ETS translocation variant 4 (Etv4) from Mus musculus (Mouse).